The following is a 473-amino-acid chain: 3-isopropylmalate dehydratase large subunit (473 aa).

Cysteine 351, cysteine 414, and cysteine 417 together coordinate [4Fe-4S] cluster.

This sequence belongs to the aconitase/IPM isomerase family. LeuC type 1 subfamily. Heterodimer of LeuC and LeuD. Requires [4Fe-4S] cluster as cofactor.

The catalysed reaction is (2R,3S)-3-isopropylmalate = (2S)-2-isopropylmalate. It functions in the pathway amino-acid biosynthesis; L-leucine biosynthesis; L-leucine from 3-methyl-2-oxobutanoate: step 2/4. Its function is as follows. Catalyzes the isomerization between 2-isopropylmalate and 3-isopropylmalate, via the formation of 2-isopropylmaleate. In Paracidovorax citrulli (strain AAC00-1) (Acidovorax citrulli), this protein is 3-isopropylmalate dehydratase large subunit.